A 360-amino-acid chain; its full sequence is Heat-inducible transcription repressor HrcA (360 aa).

Belongs to the HrcA family.

Negative regulator of class I heat shock genes (grpE-dnaK-dnaJ and groELS operons). Prevents heat-shock induction of these operons. In Gloeobacter violaceus (strain ATCC 29082 / PCC 7421), this protein is Heat-inducible transcription repressor HrcA.